The sequence spans 381 residues: Alkanesulfonate monooxygenase (381 aa).

It belongs to the SsuD family. In terms of assembly, homotetramer.

The enzyme catalyses an alkanesulfonate + FMNH2 + O2 = an aldehyde + FMN + sulfite + H2O + 2 H(+). Its function is as follows. Catalyzes the desulfonation of aliphatic sulfonates. The protein is Alkanesulfonate monooxygenase of Shigella flexneri serotype 5b (strain 8401).